Consider the following 485-residue polypeptide: Glutamate--tRNA ligase (485 aa).

A 'HIGH' region motif is present at residues 11–21 (PSPTGHLHIGG). The short motif at 252 to 256 (KMSKR) is the 'KMSKS' region element. An ATP-binding site is contributed by K255.

This sequence belongs to the class-I aminoacyl-tRNA synthetase family. Glutamate--tRNA ligase type 1 subfamily. Monomer.

The protein localises to the cytoplasm. The enzyme catalyses tRNA(Glu) + L-glutamate + ATP = L-glutamyl-tRNA(Glu) + AMP + diphosphate. In terms of biological role, catalyzes the attachment of glutamate to tRNA(Glu) in a two-step reaction: glutamate is first activated by ATP to form Glu-AMP and then transferred to the acceptor end of tRNA(Glu). The chain is Glutamate--tRNA ligase from Halalkalibacterium halodurans (strain ATCC BAA-125 / DSM 18197 / FERM 7344 / JCM 9153 / C-125) (Bacillus halodurans).